Here is a 1287-residue protein sequence, read N- to C-terminus: Rho GTPase-activating protein 33 (1287 aa).

Residues 1–40 (MVARSTDSLDGPGEGSVQPLPTAGGPSVKGKPGKRLSAPR) are disordered. Ser-8 bears the Phosphoserine mark. The region spanning 59 to 168 (FGHIQLLLSP…CGPVLTWMEL (110 aa)) is the PX; atypical domain. Positions 186 to 248 (PAVAAAHVIK…PSECVELFTE (63 aa)) constitute an SH3 domain. Positions 315-510 (CDLGEHLSNS…FLLTHVDVLF (196 aa)) constitute a Rho-GAP domain. Disordered regions lie at residues 551 to 792 (RTQG…SPAA), 813 to 832 (AGGA…GRSL), 859 to 1030 (KLRG…VPTP), 1056 to 1075 (GPPS…SLGP), 1090 to 1134 (GASE…SPDF), and 1146 to 1287 (PPDH…RSYC). Positions 558–571 (TPTEPTTPKAPASP) are enriched in low complexity. At Ser-570 the chain carries Phosphoserine. Positions 572-584 (AERRKGERGEKQR) are enriched in basic and acidic residues. Residues 622–645 (SGSRPDTVTLRSAKSEESLSSQAS) show a composition bias toward polar residues. The residue at position 636 (Ser-636) is a Phosphoserine. Positions 672 to 709 (AGSCESLSSSSSSESSSSESSSSSSESSAAGLGALSGS) are enriched in low complexity. At Ser-727 the chain carries Phosphoserine. The span at 752-766 (PGDPAPPASPAPPAP) shows a compositional bias: pro residues. Composition is skewed to low complexity over residues 813–829 (AGGA…LSPG) and 896–919 (PARL…SQQE). Composition is skewed to polar residues over residues 972 to 981 (RQQSDGSLLR) and 1019 to 1028 (SPCSVPSQVP). A Phosphotyrosine modification is found at Tyr-1169. Over residues 1175-1189 (GPRGPSPASSSSSSP) the composition is skewed to low complexity. Omega-N-methylarginine is present on Arg-1244. The span at 1274–1287 (SWSLHSEGQTRSYC) shows a compositional bias: polar residues.

It belongs to the PX domain-containing GAP family. In terms of assembly, specifically interacts with CDC42 and RHOQ/TC10 through its Rho-GAP domain. Interacts with NEK6.

May be involved in several stages of intracellular trafficking. Could play an important role in the regulation of glucose transport by insulin. May act as a downstream effector of RHOQ/TC10 in the regulation of insulin-stimulated glucose transport. This is Rho GTPase-activating protein 33 (ARHGAP33) from Homo sapiens (Human).